The sequence spans 383 residues: 3-phytase (383 aa).

The signal sequence occupies residues 1 to 26; that stretch reads MNHSKTLLLTAAAGLMLTCGAVSSQA. A propeptide spanning residues 27-30 is cleaved from the precursor; the sequence is KHKL. Residues 31–362 form the BPP domain; that stretch reads SDPYHFTVNA…VPWERIADKI (332 aa). The disordered stretch occupies residues 364–383; it reads FHPQVNKQVDPRKMTDRSGK. Over residues 372–383 the composition is skewed to basic and acidic residues; it reads VDPRKMTDRSGK.

The protein resides in the secreted. It carries out the reaction 1D-myo-inositol hexakisphosphate + H2O = 1D-myo-inositol 1,2,4,5,6-pentakisphosphate + phosphate. The polypeptide is 3-phytase (phy) (Bacillus sp. (strain DS11)).